Here is a 323-residue protein sequence, read N- to C-terminus: Large ribosomal subunit protein uL10 (323 aa).

Positions 296 to 323 (AAPAAPSAAAKEEPEESDEDDFGMGGLF) are disordered. The segment covering 308 to 317 (EPEESDEDDF) has biased composition (acidic residues).

This sequence belongs to the universal ribosomal protein uL10 family. P0 forms a pentameric complex by interaction with dimers of P1 and P2. In terms of processing, phosphorylated.

Functionally, ribosomal protein P0 is the functional equivalent of E.coli protein L10. This chain is Large ribosomal subunit protein uL10 (LIPO-A), found in Leishmania infantum.